The following is a 177-amino-acid chain: ATP synthase subunit delta (177 aa).

The protein belongs to the ATPase delta chain family. As to quaternary structure, F-type ATPases have 2 components, F(1) - the catalytic core - and F(0) - the membrane proton channel. F(1) has five subunits: alpha(3), beta(3), gamma(1), delta(1), epsilon(1). F(0) has three main subunits: a(1), b(2) and c(10-14). The alpha and beta chains form an alternating ring which encloses part of the gamma chain. F(1) is attached to F(0) by a central stalk formed by the gamma and epsilon chains, while a peripheral stalk is formed by the delta and b chains.

The protein resides in the cell inner membrane. F(1)F(0) ATP synthase produces ATP from ADP in the presence of a proton or sodium gradient. F-type ATPases consist of two structural domains, F(1) containing the extramembraneous catalytic core and F(0) containing the membrane proton channel, linked together by a central stalk and a peripheral stalk. During catalysis, ATP synthesis in the catalytic domain of F(1) is coupled via a rotary mechanism of the central stalk subunits to proton translocation. Its function is as follows. This protein is part of the stalk that links CF(0) to CF(1). It either transmits conformational changes from CF(0) to CF(1) or is implicated in proton conduction. In Shigella boydii serotype 18 (strain CDC 3083-94 / BS512), this protein is ATP synthase subunit delta.